Consider the following 410-residue polypeptide: Schlafen-like protein 1 (410 aa).

2 disordered regions span residues 1–20 and 141–199; these read MSLR…VMSQ and LHHR…SGVR. Polar residues predominate over residues 8–20; that stretch reads AQTQMWESPVMSQ. The segment covering 154–173 has biased composition (pro residues); it reads SHSPGPSPGPSPGLRHPPLP. Residue 264-271 coordinates ATP; that stretch reads GVEDSGLV. A coiled-coil region spans residues 370-401; it reads QKWAMELGKLEEKVKVLTLEKEQLQQQLRQRQ.

The protein belongs to the Schlafen family. Subgroup I subfamily.

This Mus musculus (Mouse) protein is Schlafen-like protein 1 (Slfnl1).